Consider the following 251-residue polypeptide: Triosephosphate isomerase (251 aa).

Position 9–11 (9–11 (NWK)) interacts with substrate. Residue His95 is the Electrophile of the active site. Glu167 (proton acceptor) is an active-site residue. Residues Gly173, Ser213, and 234–235 (GG) each bind substrate. Ser213 bears the Phosphoserine mark.

Belongs to the triosephosphate isomerase family. As to quaternary structure, homodimer.

It is found in the cytoplasm. It catalyses the reaction D-glyceraldehyde 3-phosphate = dihydroxyacetone phosphate. It participates in carbohydrate biosynthesis; gluconeogenesis. The protein operates within carbohydrate degradation; glycolysis; D-glyceraldehyde 3-phosphate from glycerone phosphate: step 1/1. In terms of biological role, involved in the gluconeogenesis. Catalyzes stereospecifically the conversion of dihydroxyacetone phosphate (DHAP) to D-glyceraldehyde-3-phosphate (G3P). In Bacillus cytotoxicus (strain DSM 22905 / CIP 110041 / 391-98 / NVH 391-98), this protein is Triosephosphate isomerase.